The sequence spans 362 residues: Heme A synthase (362 aa).

5 consecutive transmembrane segments (helical) span residues 10–30 (LAAI…MVLV), 102–122 (VIGM…AVSG), 128–148 (LWLI…MVAS), 159–179 (VRLA…VWTL), and 198–218 (AWGL…VAGL). His-262 is a binding site for heme. A run of 3 helical transmembrane segments spans residues 266 to 286 (AYTL…AGAG), 297 to 317 (LAAI…VVPI), and 318 to 338 (SLAL…VLQA). His-323 is a binding site for heme.

The protein belongs to the COX15/CtaA family. Type 2 subfamily. Interacts with CtaB. Heme b serves as cofactor.

The protein resides in the cell membrane. The enzyme catalyses Fe(II)-heme o + 2 A + H2O = Fe(II)-heme a + 2 AH2. It participates in porphyrin-containing compound metabolism; heme A biosynthesis; heme A from heme O: step 1/1. Catalyzes the conversion of heme O to heme A by two successive hydroxylations of the methyl group at C8. The first hydroxylation forms heme I, the second hydroxylation results in an unstable dihydroxymethyl group, which spontaneously dehydrates, resulting in the formyl group of heme A. In Bradyrhizobium sp. (strain BTAi1 / ATCC BAA-1182), this protein is Heme A synthase.